The sequence spans 459 residues: Pup--protein ligase (459 aa).

E9 is a Mg(2+) binding site. R54 lines the ATP pocket. Residue Y56 coordinates Mg(2+). The Proton acceptor role is filled by D58. E64 provides a ligand contact to Mg(2+). T67 and W421 together coordinate ATP.

Belongs to the Pup ligase/Pup deamidase family. Pup-conjugating enzyme subfamily.

It carries out the reaction ATP + [prokaryotic ubiquitin-like protein]-L-glutamate + [protein]-L-lysine = ADP + phosphate + N(6)-([prokaryotic ubiquitin-like protein]-gamma-L-glutamyl)-[protein]-L-lysine.. It functions in the pathway protein degradation; proteasomal Pup-dependent pathway. The protein operates within protein modification; protein pupylation. Catalyzes the covalent attachment of the prokaryotic ubiquitin-like protein modifier Pup to the proteasomal substrate proteins, thereby targeting them for proteasomal degradation. This tagging system is termed pupylation. The ligation reaction involves the side-chain carboxylate of the C-terminal glutamate of Pup and the side-chain amino group of a substrate lysine. This is Pup--protein ligase from Jonesia denitrificans (strain ATCC 14870 / DSM 20603 / BCRC 15368 / CIP 55.134 / JCM 11481 / NBRC 15587 / NCTC 10816 / Prevot 55134) (Listeria denitrificans).